The primary structure comprises 425 residues: Serine--tRNA ligase (425 aa).

230 to 232 (TAE) is a binding site for L-serine. 261–263 (RSE) contacts ATP. Position 284 (glutamate 284) interacts with L-serine. An ATP-binding site is contributed by 348 to 351 (EISS). Serine 384 is an L-serine binding site.

Belongs to the class-II aminoacyl-tRNA synthetase family. Type-1 seryl-tRNA synthetase subfamily. As to quaternary structure, homodimer. The tRNA molecule binds across the dimer.

It localises to the cytoplasm. The catalysed reaction is tRNA(Ser) + L-serine + ATP = L-seryl-tRNA(Ser) + AMP + diphosphate + H(+). The enzyme catalyses tRNA(Sec) + L-serine + ATP = L-seryl-tRNA(Sec) + AMP + diphosphate + H(+). It participates in aminoacyl-tRNA biosynthesis; selenocysteinyl-tRNA(Sec) biosynthesis; L-seryl-tRNA(Sec) from L-serine and tRNA(Sec): step 1/1. Its function is as follows. Catalyzes the attachment of serine to tRNA(Ser). Is also able to aminoacylate tRNA(Sec) with serine, to form the misacylated tRNA L-seryl-tRNA(Sec), which will be further converted into selenocysteinyl-tRNA(Sec). This Streptococcus pyogenes serotype M5 (strain Manfredo) protein is Serine--tRNA ligase.